Here is a 336-residue protein sequence, read N- to C-terminus: Serpentine receptor class gamma-13 (336 aa).

8 consecutive transmembrane segments (helical) span residues L32–I52, F68–L88, F93–F113, V133–W153, I156–L176, F210–I230, T246–F266, and L277–I297.

Belongs to the nematode receptor-like protein srg family.

The protein resides in the membrane. This is Serpentine receptor class gamma-13 (srg-13) from Caenorhabditis elegans.